The following is a 97-amino-acid chain: Transcription and mRNA export factor SUS1 (97 aa).

It belongs to the ENY2 family. Component of the nuclear pore complex (NPC)-associated TREX-2 complex (transcription and export complex 2), composed of at least SUS1, SAC3, THP1, SEM1, and CDC31. TREX-2 contains 2 SUS1 chains. The TREX-2 complex interacts with the nucleoporin NUP1. Component of the 1.8 MDa SAGA transcription coactivator-HAT complex. SAGA is built of 5 distinct domains with specialized functions. Within the SAGA complex, SUS1, SGF11, SGF73 and UBP8 form an additional subcomplex of SAGA called the DUB module (deubiquitination module). Interacts directly with THP1, SAC3, SGF11, and with the RNA polymerase II.

It is found in the nucleus. The protein localises to the nucleoplasm. It localises to the cytoplasm. Its subcellular location is the P-body. Functionally, involved in mRNA export coupled transcription activation by association with both the TREX-2 and the SAGA complexes. At the promoters, SAGA is required for recruitment of the basal transcription machinery. It influences RNA polymerase II transcriptional activity through different activities such as TBP interaction and promoter selectivity, interaction with transcription activators, and chromatin modification through histone acetylation and deubiquitination. Within the SAGA complex, participates in a subcomplex required for deubiquitination of H2B and for the maintenance of steady-state H3 methylation levels. The TREX-2 complex functions in docking export-competent ribonucleoprotein particles (mRNPs) to the nuclear entrance of the nuclear pore complex (nuclear basket). TREX-2 participates in mRNA export and accurate chromatin positioning in the nucleus by tethering genes to the nuclear periphery. May also be involved in cytoplasmic mRNA decay by interaction with components of P-bodies. This chain is Transcription and mRNA export factor SUS1, found in Meyerozyma guilliermondii (strain ATCC 6260 / CBS 566 / DSM 6381 / JCM 1539 / NBRC 10279 / NRRL Y-324) (Yeast).